The primary structure comprises 562 residues: MASRRLLSSLLRSSSRRSVSKSPISNINPKLSSSSPSSKSRASPYGYLLTRAAEYATSAAAAAPPQPPPAKPEGGKGGGKITDEFTGKGAIGQVCQVIGAVVDVRFDEGLPPILTSLEVLDHSIRLVLEVAQHMGEGMVRTIAMDGTEGLVRGQRVLNTGSPITVPVGRANPWTYHEVIGEPIDERGDIKTSHFLPIHREAPAFVDQATEQQILVTGIKVVDLLAPYQRGGKIGLFGGAGVGKTVLIMELINNVAKAHGGFSVFAGVGERTREGNDLYREMIESGVIKLGDKQADSKCALVYGQMNEPPGARARVGLTGLTVAEHFRDAEGQDVLLFIDNIFRFTQANSEVSALLGRIPSAVGYQPTLATDLGGLQERITTTKKGSITSVQAIYVPADDLTDPAPATTFAHLDATTVLSRQISELGIYPAVDPLDSTSRMLSPHILGEEHYNTARGVQKVLQNYKNLQDIIAILGMDELSEDDKLTVARARKIQRFLSQPFHVAEVFTGAPGKYVELKESITSFQGVLDGKYDDLPEQSFYMVGGIDEVIAKADKIAKESAS.

Low complexity-rich tracts occupy residues M1–S13 and S20–S40. 2 disordered regions span residues M1–S43 and S58–D83. The transit peptide at M1–Y55 directs the protein to the mitochondrion. G237 to T244 contacts ATP.

Belongs to the ATPase alpha/beta chains family. As to quaternary structure, F-type ATPases have 2 components, CF(1) - the catalytic core - and CF(0) - the membrane proton channel. CF(1) has five subunits: alpha(3), beta(3), gamma(1), delta(1), epsilon(1). CF(0) has three main subunits: a, b and c.

It localises to the mitochondrion. Its subcellular location is the mitochondrion inner membrane. The enzyme catalyses ATP + H2O + 4 H(+)(in) = ADP + phosphate + 5 H(+)(out). Mitochondrial membrane ATP synthase (F(1)F(0) ATP synthase or Complex V) produces ATP from ADP in the presence of a proton gradient across the membrane which is generated by electron transport complexes of the respiratory chain. F-type ATPases consist of two structural domains, F(1) - containing the extramembraneous catalytic core, and F(0) - containing the membrane proton channel, linked together by a central stalk and a peripheral stalk. During catalysis, ATP synthesis in the catalytic domain of F(1) is coupled via a rotary mechanism of the central stalk subunits to proton translocation. Subunits alpha and beta form the catalytic core in F(1). Rotation of the central stalk against the surrounding alpha(3)beta(3) subunits leads to hydrolysis of ATP in three separate catalytic sites on the beta subunits. The polypeptide is ATP synthase subunit beta, mitochondrial (ATPB) (Hevea brasiliensis (Para rubber tree)).